A 161-amino-acid chain; its full sequence is Bifurcating [FeFe] hydrogenase gamma subunit (161 aa).

4 residues coordinate [2Fe-2S] cluster: C78, C83, C119, and C123.

This sequence belongs to the complex I 24 kDa subunit family. In terms of assembly, heterotrimer composed of HydA (alpha subunit), HydB (beta subunit) and HydC (gamma subunit). Near neutral and acidic pH conditions favor oligomerization of the heterotrimeric holoenzyme. Requires [2Fe-2S] cluster as cofactor.

It localises to the cytoplasm. It catalyses the reaction 2 H2 + 2 oxidized [2Fe-2S]-[ferredoxin] + NAD(+) = 2 reduced [2Fe-2S]-[ferredoxin] + NADH + 3 H(+). Its function is as follows. Catalyzes the oxidation of the physiological electron carriers NADH and reduced ferredoxin, coupled to the production of H(2). Acts as a bifurcating [FeFe] hydrogenase, which uses the exergonic oxidation of reduced ferredoxin to drive the unfavorable oxidation of NADH to produce H(2). The gamma subunit might be the site where reduced ferredoxin is oxidized. This chain is Bifurcating [FeFe] hydrogenase gamma subunit, found in Thermotoga maritima (strain ATCC 43589 / DSM 3109 / JCM 10099 / NBRC 100826 / MSB8).